Consider the following 80-residue polypeptide: ATP synthase F(1) complex subunit delta, mitochondrial (80 aa).

The N-terminal 22 residues, Met-1–Tyr-22, are a transit peptide targeting the mitochondrion.

The protein belongs to the ATPase epsilon chain family. Component of the ATP synthase complex composed at least of ATP5F1A/subunit alpha, ATP5F1B/subunit beta, ATP5MC1/subunit c (homooctomer), MT-ATP6/subunit a, MT-ATP8/subunit 8, ATP5ME/subunit e, ATP5MF/subunit f, ATP5MG/subunit g, ATP5MK/subunit k, ATP5MJ/subunit j, ATP5F1C/subunit gamma, ATP5F1D/subunit delta, ATP5F1E/subunit epsilon, ATP5PF/subunit F6, ATP5PB/subunit b, ATP5PD/subunit d, ATP5PO/subunit OSCP. ATP synthase complex consists of a soluble F(1) head domain (subunits alpha(3) and beta(3)) - the catalytic core - and a membrane F(0) domain - the membrane proton channel (subunits c, a, 8, e, f, g, k and j). These two domains are linked by a central stalk (subunits gamma, delta, and epsilon) rotating inside the F1 region and a stationary peripheral stalk (subunits F6, b, d, and OSCP). Component of a complex composed at least by ATPIF1, ATP5F1A, ATP5F1B, ATP5F1C AND ATP5F1E.

The protein localises to the mitochondrion. It localises to the mitochondrion inner membrane. Functionally, subunit delta, of the mitochondrial membrane ATP synthase complex (F(1)F(0) ATP synthase or Complex V) that produces ATP from ADP in the presence of a proton gradient across the membrane which is generated by electron transport complexes of the respiratory chain. ATP synthase complex consist of a soluble F(1) head domain - the catalytic core - and a membrane F(1) domain - the membrane proton channel. These two domains are linked by a central stalk rotating inside the F(1) region and a stationary peripheral stalk. During catalysis, ATP synthesis in the catalytic domain of F(1) is coupled via a rotary mechanism of the central stalk subunits to proton translocation. In vivo, can only synthesize ATP although its ATP hydrolase activity can be activated artificially in vitro. With the central stalk subunit gamma, is essential for the biogenesis of F(1) catalytic part of the ATP synthase complex namely in the formation of F1 assembly intermediate. The chain is ATP synthase F(1) complex subunit delta, mitochondrial from Sus scrofa (Pig).